A 253-amino-acid chain; its full sequence is 5'-nucleotidase SurE (253 aa).

A divalent metal cation is bound by residues Asp8, Asp9, Ser39, and Asn95.

Belongs to the SurE nucleotidase family. The cofactor is a divalent metal cation.

It is found in the cytoplasm. It catalyses the reaction a ribonucleoside 5'-phosphate + H2O = a ribonucleoside + phosphate. Functionally, nucleotidase that shows phosphatase activity on nucleoside 5'-monophosphates. The sequence is that of 5'-nucleotidase SurE from Clostridium beijerinckii (strain ATCC 51743 / NCIMB 8052) (Clostridium acetobutylicum).